We begin with the raw amino-acid sequence, 512 residues long: Glutathione-binding protein GsiB (512 aa).

A signal peptide spans 1–26 (MARAVHRSGLVALGIATALMASCAFA).

The protein belongs to the bacterial solute-binding protein 5 family. In terms of assembly, the complex is composed of two ATP-binding proteins (GsiA), two transmembrane proteins (GsiC and GsiD) and a solute-binding protein (GsiB).

It is found in the periplasm. In terms of biological role, part of the ABC transporter complex GsiABCD involved in glutathione import. Binds glutathione. The chain is Glutathione-binding protein GsiB from Shigella boydii serotype 4 (strain Sb227).